We begin with the raw amino-acid sequence, 229 residues long: MVRYQDIVDDVYSKLFLLEQWKKVYPLTEYYDVYIDVCYGHRVRAFIQNLGFTLEQESFTIHIEYDLPCIPGLAEFLRLWNNFDLRGKYIYRATTKKYINEYVLAFTPFMIVNEPYEKENKYLSYWSVSPYTSNYFVRAYVERYGVNPKEIVVLVAPYDDRICSKDWYDNFSPEYTIIQDGKPTNFGDMRYLRELEVRCFKYSVSRLIYQLPYSDFLELMKLLPSKYVY.

This is an uncharacterized protein from Sulfolobus islandicus filamentous virus (isolate Iceland/Hveragerdi) (SIFV).